The primary structure comprises 227 residues: Phosphoribosylformylglycinamidine synthase subunit PurQ (227 aa).

Residues 2 to 227 (RWAIVRFPGA…FLGLVREVAR (226 aa)) enclose the Glutamine amidotransferase type-1 domain. Catalysis depends on cysteine 85, which acts as the Nucleophile. Active-site residues include histidine 200 and glutamate 202.

Part of the FGAM synthase complex composed of 1 PurL, 1 PurQ and 2 PurS subunits.

The protein resides in the cytoplasm. It catalyses the reaction N(2)-formyl-N(1)-(5-phospho-beta-D-ribosyl)glycinamide + L-glutamine + ATP + H2O = 2-formamido-N(1)-(5-O-phospho-beta-D-ribosyl)acetamidine + L-glutamate + ADP + phosphate + H(+). The catalysed reaction is L-glutamine + H2O = L-glutamate + NH4(+). The protein operates within purine metabolism; IMP biosynthesis via de novo pathway; 5-amino-1-(5-phospho-D-ribosyl)imidazole from N(2)-formyl-N(1)-(5-phospho-D-ribosyl)glycinamide: step 1/2. In terms of biological role, part of the phosphoribosylformylglycinamidine synthase complex involved in the purines biosynthetic pathway. Catalyzes the ATP-dependent conversion of formylglycinamide ribonucleotide (FGAR) and glutamine to yield formylglycinamidine ribonucleotide (FGAM) and glutamate. The FGAM synthase complex is composed of three subunits. PurQ produces an ammonia molecule by converting glutamine to glutamate. PurL transfers the ammonia molecule to FGAR to form FGAM in an ATP-dependent manner. PurS interacts with PurQ and PurL and is thought to assist in the transfer of the ammonia molecule from PurQ to PurL. The protein is Phosphoribosylformylglycinamidine synthase subunit PurQ of Thermus thermophilus (strain ATCC BAA-163 / DSM 7039 / HB27).